A 231-amino-acid chain; its full sequence is Large ribosomal subunit protein uL5m (231 aa).

This sequence belongs to the universal ribosomal protein uL5 family.

It is found in the mitochondrion. The chain is Large ribosomal subunit protein uL5m (RPL5) from Prototheca wickerhamii.